Here is a 73-residue protein sequence, read N- to C-terminus: Large ribosomal subunit protein bL31 (73 aa).

The protein belongs to the bacterial ribosomal protein bL31 family. Type A subfamily. In terms of assembly, part of the 50S ribosomal subunit.

Functionally, binds the 23S rRNA. The protein is Large ribosomal subunit protein bL31 of Brucella abortus (strain 2308).